The chain runs to 90 residues: UPF0335 protein R02793 (90 aa).

It belongs to the UPF0335 family.

This chain is UPF0335 protein R02793, found in Rhizobium meliloti (strain 1021) (Ensifer meliloti).